The chain runs to 1042 residues: Isoleucine--tRNA ligase (1042 aa).

The short motif at P59–H69 is the 'HIGH' region element. The 'KMSKS' region signature appears at K619–S623. K622 serves as a coordination point for ATP.

Belongs to the class-I aminoacyl-tRNA synthetase family. IleS type 2 subfamily. Monomer. Requires Zn(2+) as cofactor.

It localises to the cytoplasm. It catalyses the reaction tRNA(Ile) + L-isoleucine + ATP = L-isoleucyl-tRNA(Ile) + AMP + diphosphate. Functionally, catalyzes the attachment of isoleucine to tRNA(Ile). As IleRS can inadvertently accommodate and process structurally similar amino acids such as valine, to avoid such errors it has two additional distinct tRNA(Ile)-dependent editing activities. One activity is designated as 'pretransfer' editing and involves the hydrolysis of activated Val-AMP. The other activity is designated 'posttransfer' editing and involves deacylation of mischarged Val-tRNA(Ile). This chain is Isoleucine--tRNA ligase, found in Nocardia farcinica (strain IFM 10152).